The chain runs to 509 residues: Histidine ammonia-lyase (509 aa).

The 5-imidazolinone (Ala-Gly) cross-link spans 144–146 (ASG). At S145 the chain carries 2,3-didehydroalanine (Ser).

It belongs to the PAL/histidase family. Post-translationally, contains an active site 4-methylidene-imidazol-5-one (MIO), which is formed autocatalytically by cyclization and dehydration of residues Ala-Ser-Gly.

Its subcellular location is the cytoplasm. It catalyses the reaction L-histidine = trans-urocanate + NH4(+). Its pathway is amino-acid degradation; L-histidine degradation into L-glutamate; N-formimidoyl-L-glutamate from L-histidine: step 1/3. This Pseudoalteromonas atlantica (strain T6c / ATCC BAA-1087) protein is Histidine ammonia-lyase.